The primary structure comprises 1005 residues: PDZ domain-containing protein 7 (1005 aa).

PDZ domains follow at residues 86–168 (SVRV…RMGR) and 210–293 (IVHL…ETGR). Disordered regions lie at residues 353–378 (PEEP…DAGG), 700–859 (VSPS…KTPS), and 949–1005 (VRVP…ARLL). Positions 770 to 786 (AQSRSRSRSRSRSRSRS) are enriched in basic residues. A compositionally biased stretch (low complexity) spans 787 to 799 (SRGQGKSPGRRSP). The segment covering 989 to 998 (PEPPTNPQTP) has biased composition (pro residues).

In terms of assembly, homodimerizes (via PDZ2 domain). Component of USH2 complex, composed of ADGRV1, PDZD7, USH2A and WHRN. Interacts (via PDZ domains) with WHRN; the interaction is direct. Interacts with USH1G. Interacts with ADGRV1 (via the cytoplasmic region). Interacts with USH2A (via the cytoplasmic region). Interacts with MYO7A (via MyTH4-FERM domains).

It is found in the cell projection. Its subcellular location is the cilium. The protein resides in the nucleus. It localises to the stereocilium. In terms of biological role, in cochlear developing hair cells, essential in organizing the USH2 complex at stereocilia ankle links. Blocks inhibition of adenylate cyclase activity mediated by ADGRV1. The chain is PDZ domain-containing protein 7 (PDZD7) from Pongo abelii (Sumatran orangutan).